Consider the following 254-residue polypeptide: Insulin-like growth factor-binding protein 4 (254 aa).

An N-terminal signal peptide occupies residues 1–21 (MLPFGLVAALLLAAGPRPSLG). Residues 23 to 103 (EAIHCPPCSE…MHGQGVCTEL (81 aa)) enclose the IGFBP N-terminal domain. 6 cysteine pairs are disulfide-bonded: cysteine 27–cysteine 53, cysteine 30–cysteine 55, cysteine 38–cysteine 56, cysteine 44–cysteine 59, cysteine 67–cysteine 80, and cysteine 74–cysteine 100. N-linked (GlcNAc...) asparagine glycosylation occurs at asparagine 125. Cysteines 131 and 138 form a disulfide. Residues 149–169 (RSKMKVVGTPREEPRPVPQGS) are disordered. In terms of domain architecture, Thyroglobulin type-1 spans 167 to 245 (QGSCQSELHR…GLEPKGELDC (79 aa)). Disulfide bonds link cysteine 170-cysteine 200, cysteine 211-cysteine 222, and cysteine 224-cysteine 245. Position 251 is a phosphoserine (serine 251).

As to quaternary structure, binds IGF2 more than IGF1.

The protein localises to the secreted. In terms of biological role, IGF-binding proteins prolong the half-life of the IGFs and have been shown to either inhibit or stimulate the growth promoting effects of the IGFs on cell culture. They alter the interaction of IGFs with their cell surface receptors. This chain is Insulin-like growth factor-binding protein 4 (Igfbp4), found in Rattus norvegicus (Rat).